Here is a 363-residue protein sequence, read N- to C-terminus: Glutamate 5-kinase (363 aa).

Lys-3 lines the ATP pocket. Substrate-binding residues include Ser-43, Asp-128, and Asn-140. Residues Thr-160–Asp-161 and Thr-202–Lys-208 each bind ATP. One can recognise a PUA domain in the interval Ala-267–Ser-349.

This sequence belongs to the glutamate 5-kinase family.

Its subcellular location is the cytoplasm. The enzyme catalyses L-glutamate + ATP = L-glutamyl 5-phosphate + ADP. The protein operates within amino-acid biosynthesis; L-proline biosynthesis; L-glutamate 5-semialdehyde from L-glutamate: step 1/2. In terms of biological role, catalyzes the transfer of a phosphate group to glutamate to form L-glutamate 5-phosphate. The polypeptide is Glutamate 5-kinase (Xanthomonas axonopodis pv. citri (strain 306)).